Consider the following 107-residue polypeptide: MDPFAGTGQSKSYRTFGNVFQRLSMSGNPKPLAKKPLLLPEASKAIEFWNYRDVIGGEEAEQERNERASRIAISRIASSRSSIPEYRQAIMQHLTKHVQQLDQLAEW.

The APC/C is composed of at least 13 subunits: apc1, apc2, nuc2, apc4, apc5, cut9, apc8, apc10, apc11, hcn1, apc13, apc14 and apc15.

It is found in the ascus epiplasm. Its function is as follows. Component of the anaphase promoting complex/cyclosome (APC/C), a cell cycle-regulated E3 ubiquitin-protein ligase complex that controls progression through mitosis and the G1 phase of the cell cycle. The APC/C is thought to confer substrate specificity and, in the presence of ubiquitin-conjugating E2 enzymes, it catalyzes the formation of protein-ubiquitin conjugates that are subsequently degraded by the 26S proteasome. Appears to play a role in spore wall formation. In Schizosaccharomyces pombe (strain 972 / ATCC 24843) (Fission yeast), this protein is Anaphase-promoting complex subunit 14.